A 160-amino-acid polypeptide reads, in one-letter code: Troponin C, skeletal muscle (160 aa).

EF-hand domains lie at 15-50 (EMIA…LGQN), 51-86 (PTRE…QLKE), 91-126 (KSEE…SGEP), and 127-160 (VSEE…ENIQ). Residues D28, D30, D34, E39, D64, D66, S68, T70, E75, D104, N106, D108, E115, D140, N142, D144, K146, and E151 each coordinate Ca(2+).

The protein belongs to the troponin C family.

In terms of biological role, troponin is the central regulatory protein of striated muscle contraction. Tn consists of three components: Tn-I which is the inhibitor of actomyosin ATPase, Tn-T which contains the binding EF-hand for tropomyosin and Tn-C. The binding of calcium to Tn-C abolishes the inhibitory action of Tn on actin filaments. This Anguilla anguilla (European freshwater eel) protein is Troponin C, skeletal muscle.